A 204-amino-acid chain; its full sequence is Holliday junction branch migration complex subunit RuvA (204 aa).

The tract at residues 1–67 is domain I; the sequence is MIDYLYGTLD…GGVISLYGFF (67 aa). The segment at 68 to 149 is domain II; the sequence is TIEEREMYLL…TVNVLNKEKQ (82 aa). Residues 150 to 154 are flexible linker; it reads TGAET. The tract at residues 155 to 204 is domain III; sequence IKNTMVSEAIAGLITLGYKMQQARVAVTNVYEHNENITLEDLIKKSLQYL.

The protein belongs to the RuvA family. Homotetramer. Forms an RuvA(8)-RuvB(12)-Holliday junction (HJ) complex. HJ DNA is sandwiched between 2 RuvA tetramers; dsDNA enters through RuvA and exits via RuvB. An RuvB hexamer assembles on each DNA strand where it exits the tetramer. Each RuvB hexamer is contacted by two RuvA subunits (via domain III) on 2 adjacent RuvB subunits; this complex drives branch migration. In the full resolvosome a probable DNA-RuvA(4)-RuvB(12)-RuvC(2) complex forms which resolves the HJ.

Its subcellular location is the cytoplasm. The RuvA-RuvB-RuvC complex processes Holliday junction (HJ) DNA during genetic recombination and DNA repair, while the RuvA-RuvB complex plays an important role in the rescue of blocked DNA replication forks via replication fork reversal (RFR). RuvA specifically binds to HJ cruciform DNA, conferring on it an open structure. The RuvB hexamer acts as an ATP-dependent pump, pulling dsDNA into and through the RuvAB complex. HJ branch migration allows RuvC to scan DNA until it finds its consensus sequence, where it cleaves and resolves the cruciform DNA. In Endomicrobium trichonymphae, this protein is Holliday junction branch migration complex subunit RuvA.